We begin with the raw amino-acid sequence, 79 residues long: DNA-directed RNA polymerase subunit omega (79 aa).

Belongs to the RNA polymerase subunit omega family. As to quaternary structure, the RNAP catalytic core consists of 2 alpha, 1 beta, 1 beta' and 1 omega subunit. When a sigma factor is associated with the core the holoenzyme is formed, which can initiate transcription.

The enzyme catalyses RNA(n) + a ribonucleoside 5'-triphosphate = RNA(n+1) + diphosphate. Functionally, promotes RNA polymerase assembly. Latches the N- and C-terminal regions of the beta' subunit thereby facilitating its interaction with the beta and alpha subunits. This Thermotoga maritima (strain ATCC 43589 / DSM 3109 / JCM 10099 / NBRC 100826 / MSB8) protein is DNA-directed RNA polymerase subunit omega (rpoZ).